Reading from the N-terminus, the 47-residue chain is Bacteriocin curvaticin DN317 (47 aa).

Belongs to the bacteriocin class IIA/YGNGV family.

It localises to the secreted. Has bactericidal activity against various Gram-negative Campylobacter, and the Gram-positive L.monocytogenes and B.subtilis. In vitro, inhibits C.jejuni strain ATCC 33560 (MIC=27.3 ug/ml). This is Bacteriocin curvaticin DN317 from Latilactobacillus curvatus (Lactobacillus curvatus).